A 137-amino-acid chain; its full sequence is Large ribosomal subunit protein eL32 (137 aa).

The disordered stretch occupies residues 95–137; the sequence is PSAAEIATPVSSRKRIASSPARQADRCSRSRRSKFRPRRLRAS. Residues 123 to 137 show a composition bias toward basic residues; the sequence is RSRRSKFRPRRLRAS.

The protein belongs to the eukaryotic ribosomal protein eL32 family.

This is Large ribosomal subunit protein eL32 (rpl32) from Trichoderma harzianum (Hypocrea lixii).